A 557-amino-acid polypeptide reads, in one-letter code: Formate--tetrahydrofolate ligase 2 (557 aa).

66–73 is a binding site for ATP; that stretch reads TPAGEGKT.

This sequence belongs to the formate--tetrahydrofolate ligase family.

It catalyses the reaction (6S)-5,6,7,8-tetrahydrofolate + formate + ATP = (6R)-10-formyltetrahydrofolate + ADP + phosphate. It functions in the pathway one-carbon metabolism; tetrahydrofolate interconversion. This is Formate--tetrahydrofolate ligase 2 from Streptococcus pyogenes serotype M3 (strain ATCC BAA-595 / MGAS315).